Here is a 336-residue protein sequence, read N- to C-terminus: F420-dependent glucose-6-phosphate dehydrogenase (336 aa).

Position 39 (aspartate 39) interacts with coenzyme F420-(gamma-Glu)n. The active-site Proton donor is histidine 40. Residues threonine 76 and 107–108 (TG) each bind coenzyme F420-(gamma-Glu)n. Glutamate 109 serves as the catalytic Proton acceptor. Coenzyme F420-(gamma-Glu)n contacts are provided by residues asparagine 112, 177–178 (GG), and 180–181 (QV). Residues threonine 195, lysine 198, lysine 259, and arginine 283 each contribute to the substrate site.

It belongs to the F420-dependent glucose-6-phosphate dehydrogenase family. As to quaternary structure, homodimer.

The catalysed reaction is oxidized coenzyme F420-(gamma-L-Glu)(n) + D-glucose 6-phosphate + H(+) = 6-phospho-D-glucono-1,5-lactone + reduced coenzyme F420-(gamma-L-Glu)(n). Catalyzes the coenzyme F420-dependent oxidation of glucose 6-phosphate (G6P) to 6-phosphogluconolactone. Appears to have a role in resistance to oxidative stress, via its consumption of G6P that serves as a source of reducing power to combat oxidative stress in mycobacteria. This is F420-dependent glucose-6-phosphate dehydrogenase from Mycolicibacterium gilvum (strain PYR-GCK) (Mycobacterium gilvum (strain PYR-GCK)).